The following is a 566-amino-acid chain: Insulinoma-associated protein 2 (566 aa).

Positions 1 to 20 (MPRGFLVKRTKRTGGLYRVR) are SNAG domain. The interval 32–117 (QGAPPFLEEA…PSPSPAKPAG (86 aa)) is disordered. A compositionally biased stretch (pro residues) spans 103-113 (GPSPSPSPSPA). The C2H2-type 1; atypical zinc-finger motif lies at 263–283 (FICQLCKEQYADPFALAQHRC). Residues 291 to 313 (YRCPECDKVFSCPANLASHRRWH) form a C2H2-type 2 zinc finger. The interval 310–418 (RRWHKPRPAA…RRVPVPGSTS (109 aa)) is disordered. Low complexity predominate over residues 318-348 (AAANAATVSSADGKPPSSSSSSSRDSGAIAS). Positions 352-369 (EGKENSRIERTADQHPQA) are enriched in basic and acidic residues. C2H2-type zinc fingers lie at residues 426–448 (FVCPYCHKKFRRQAYLRKHLSTH), 470–492 (FACPLCGAHFPTADIREKHRLWH), and 525–548 (FSCKHCPSTFFSSPGLTRHINKCH).

As to expression, expressed in heart, liver, skeletal muscle, kidney and pancreas, and, to a lesser extent, in brain, lung and spleen. In the pancreas, expressed in islet cells, including insulin- and glucagon-producing alpha- and beta-cells, but not in acinar cells (at protein level). Detected in adrenal glands, particularly in the deeper layer of the cortex (at protein level).

The protein resides in the cytoplasm. It is found in the nucleus. In terms of biological role, may function as a growth suppressor or tumor suppressor in liver cells and in certain neurons. In Homo sapiens (Human), this protein is Insulinoma-associated protein 2 (INSM2).